We begin with the raw amino-acid sequence, 213 residues long: Eukaryotic translation initiation factor 4E (213 aa).

Residues serine 2 and serine 15 each carry the phosphoserine; by CK2 modification. Threonine 22 bears the Phosphothreonine mark. 2 positions are modified to phosphoserine: serine 28 and serine 30. Lysine 114 is covalently cross-linked (Glycyl lysine isopeptide (Lys-Gly) (interchain with G-Cter in ubiquitin)).

The protein belongs to the eukaryotic initiation factor 4E family. In terms of assembly, component of the eIF4F complex, which composition varies with external and internal environmental conditions. It is composed of at least eIF4A (TIF1/TIF2), eIF4E (TIF45) and eIF4G (TIF4631 or TIF4632). Interacts with PAT1 in a RNA-dependent manner. eIF4E is also known to interact with other partners.

Its subcellular location is the cytoplasm. It localises to the nucleus. Functionally, recognizes and binds the 7-methylguanosine (m7G)-containing mRNA cap during an early step in the initiation of protein synthesis and facilitates ribosome binding by inducing the unwinding of the mRNAs secondary structures. This chain is Eukaryotic translation initiation factor 4E (CDC33), found in Saccharomyces cerevisiae (strain ATCC 204508 / S288c) (Baker's yeast).